The following is a 244-amino-acid chain: Kallikrein-6 (244 aa).

An N-terminal signal peptide occupies residues 1 to 16 (MKKLMVVLSLIAAAWA). The propeptide at 17-21 (EEQNK) is activation peptide. One can recognise a Peptidase S1 domain in the interval 22 to 242 (LVHGGPCDKT…YTNWIQKTIQ (221 aa)). 6 cysteine pairs are disulfide-bonded: cysteine 28–cysteine 157, cysteine 47–cysteine 63, cysteine 131–cysteine 231, cysteine 138–cysteine 203, cysteine 168–cysteine 182, and cysteine 193–cysteine 218. Active-site charge relay system residues include histidine 62 and aspartate 106. Asparagine 134 carries N-linked (GlcNAc...) asparagine glycosylation. Residue serine 197 is the Charge relay system of the active site.

In terms of processing, inactivated by autolytic cleavage after Arg-80. In terms of tissue distribution, in fluids, highest levels found in milk of lactating women followed by cerebrospinal fluid, nipple aspirate fluid and breast cyst fluid. Also found in serum, seminal plasma and some amniotic fluids and breast tumor cytosolic extracts. Not detected in urine. At the tissue level, highest concentrations found in glandular tissues such as salivary glands followed by lung, colon, fallopian tube, placenta, breast, pituitary and kidney. Not detected in skin, spleen, bone, thyroid, heart, ureter, liver, muscle, endometrium, testis, pancreas, seminal vesicle, ovary, adrenals and prostate. In brain, detected in gray matter neurons (at protein level). Colocalizes with pathological inclusions such as Lewy bodies and glial cytoplasmic inclusions. Overexpressed in primary breast tumors but not expressed in metastatic tumors.

Its subcellular location is the secreted. The protein resides in the nucleus. It localises to the nucleolus. The protein localises to the cytoplasm. It is found in the mitochondrion. Its subcellular location is the microsome. Its activity is regulated as follows. Inhibited by a range of serine protease inhibitors including soybean trypsin inhibitor, benzamidine and serpins. Activated by a range of glycosaminoglycans including chondroitin sulfate, dermatan sulfate, heparan sulfate and heparin. In terms of biological role, serine protease which exhibits a preference for Arg over Lys in the substrate P1 position and for Ser or Pro in the P2 position. Shows activity against amyloid precursor protein, myelin basic protein, gelatin, casein and extracellular matrix proteins such as fibronectin, laminin, vitronectin and collagen. Degrades alpha-synuclein and prevents its polymerization, indicating that it may be involved in the pathogenesis of Parkinson disease and other synucleinopathies. May be involved in regulation of axon outgrowth following spinal cord injury. Tumor cells treated with a neutralizing KLK6 antibody migrate less than control cells, suggesting a role in invasion and metastasis. The sequence is that of Kallikrein-6 (KLK6) from Homo sapiens (Human).